A 208-amino-acid polypeptide reads, in one-letter code: Coiled-coil domain-containing protein 25 (208 aa).

The Extracellular segment spans residues 1-105 (MVFYFTSSSV…SNLKKTADMD (105 aa)). A DNA-binding region spans residues 21–25 (KDKYE). Residue Lys-23 is modified to N6-acetyllysine. A helical transmembrane segment spans residues 106–122 (VGQIGFHRQKDVKIVTV). Residues 117–187 (VKIVTVEKKV…REMDELRSYS (71 aa)) adopt a coiled-coil conformation. Topologically, residues 123-208 (EKKVNEILNR…QDGNDSDEFM (86 aa)) are cytoplasmic. Residues 145-184 (EAEKECRDHEERNEKKAQIQEMKRREKEEMKKKREMDELR) are compositionally biased toward basic and acidic residues. Residues 145 to 208 (EAEKECRDHE…QDGNDSDEFM (64 aa)) form a disordered region. Ser-204 is modified (phosphoserine).

It belongs to the CCDC25 family. Interacts (via cytoplasmic region) with ILK.

It is found in the cell membrane. The protein resides in the endomembrane system. Transmembrane receptor that senses neutrophil extracellular traps (NETs) and triggers the ILK-PARVB pathway to enhance cell motility. NETs are mainly composed of DNA fibers and are released by neutrophils to bind pathogens during inflammation. Formation of NETs is also associated with cancer metastasis, NET-DNA acting as a chemotactic factor to attract cancer cells. Specifically binds NETs on its extracellular region, in particular the 8-OHdG-enriched DNA present in NETs, and recruits ILK, initiating the ILK-PARVB cascade to induce cytoskeleton rearrangement and directional migration of cells. The protein is Coiled-coil domain-containing protein 25 of Bos taurus (Bovine).